We begin with the raw amino-acid sequence, 249 residues long: Triosephosphate isomerase (249 aa).

Substrate-binding residues include Asn-12 and Lys-14. Lys-14 is subject to N6-acetyllysine. A 3'-nitrotyrosine modification is found at Tyr-68. Residue Ser-80 is modified to Phosphoserine. His-96 serves as the catalytic Electrophile. Ser-106 carries the phosphoserine modification. Lys-142 participates in a covalent cross-link: Glycyl lysine isopeptide (Lys-Gly) (interchain with G-Cter in SUMO1). Lys-149 carries the post-translational modification N6-succinyllysine. Lys-156 carries the N6-acetyllysine; alternate modification. Lys-156 carries the post-translational modification N6-succinyllysine; alternate. Glu-166 functions as the Proton acceptor in the catalytic mechanism. Phosphothreonine is present on Thr-173. Lys-194 bears the N6-acetyllysine; alternate mark. Lys-194 carries the N6-succinyllysine; alternate modification. Lys-194 is subject to N6-methyllysine; alternate. Ser-198 carries the post-translational modification Phosphoserine. At Tyr-209 the chain carries 3'-nitrotyrosine. Ser-212 is subject to Phosphoserine. Thr-214 is modified (phosphothreonine). Position 223 is a phosphoserine (Ser-223). Position 238 is an N6-acetyllysine (Lys-238).

It belongs to the triosephosphate isomerase family. As to quaternary structure, homodimer.

Its subcellular location is the cytoplasm. It carries out the reaction dihydroxyacetone phosphate = methylglyoxal + phosphate. It catalyses the reaction D-glyceraldehyde 3-phosphate = dihydroxyacetone phosphate. It functions in the pathway carbohydrate degradation; glycolysis; D-glyceraldehyde 3-phosphate from glycerone phosphate: step 1/1. It participates in carbohydrate biosynthesis; gluconeogenesis. Functionally, triosephosphate isomerase is an extremely efficient metabolic enzyme that catalyzes the interconversion between dihydroxyacetone phosphate (DHAP) and D-glyceraldehyde-3-phosphate (G3P) in glycolysis and gluconeogenesis. It is also responsible for the non-negligible production of methylglyoxal a reactive cytotoxic side-product that modifies and can alter proteins, DNA and lipids. This is Triosephosphate isomerase (Tpi1) from Rattus norvegicus (Rat).